We begin with the raw amino-acid sequence, 54 residues long: UPF0391 membrane protein Oant_1245 (54 aa).

2 helical membrane passes run 5-25 (ALVFLVVALVAGALGFGGIAG) and 29-48 (GIAQILFFVFLALLVISLIA).

The protein belongs to the UPF0391 family.

The protein resides in the cell membrane. The sequence is that of UPF0391 membrane protein Oant_1245 from Brucella anthropi (strain ATCC 49188 / DSM 6882 / CCUG 24695 / JCM 21032 / LMG 3331 / NBRC 15819 / NCTC 12168 / Alc 37) (Ochrobactrum anthropi).